The primary structure comprises 229 residues: NAD(P)H-hydrate epimerase (229 aa).

The YjeF N-terminal domain maps to 10–224; the sequence is SREVDQIAIE…DIGIPPALLD (215 aa). 57-61 serves as a coordination point for (6S)-NADPHX; that stretch reads NNGGD. The K(+) site is built by asparagine 58 and aspartate 129. Residues 133-139 and aspartate 167 each bind (6S)-NADPHX; that span reads GTGIRGQ. Serine 170 is a K(+) binding site.

Belongs to the NnrE/AIBP family. It depends on K(+) as a cofactor.

The catalysed reaction is (6R)-NADHX = (6S)-NADHX. The enzyme catalyses (6R)-NADPHX = (6S)-NADPHX. Its function is as follows. Catalyzes the epimerization of the S- and R-forms of NAD(P)HX, a damaged form of NAD(P)H that is a result of enzymatic or heat-dependent hydration. This is a prerequisite for the S-specific NAD(P)H-hydrate dehydratase to allow the repair of both epimers of NAD(P)HX. The chain is NAD(P)H-hydrate epimerase from Rubinisphaera brasiliensis (strain ATCC 49424 / DSM 5305 / JCM 21570 / IAM 15109 / NBRC 103401 / IFAM 1448) (Planctomyces brasiliensis).